The chain runs to 277 residues: MKVQDLDLNYQLVEEILSSFLRNEIRKFGFQSLVLGLSGGIDSAVVCELAVRALGAENVLAVKMPYRASSRESLEHAELMVERLSIRSEEHDISQPVDAFFTGIPEESRLRRGNIMARARMIVLYDVSARDGCLVAGTSNKTELLLGYGTMFGDMASAVNPIGDLYKSQVRGLARHLGIPAALIDKAPSADLWQGQSDEADLGFTYEEVDILLYQMLELRMDKESILAEGVPEPFYARVRQMVVRNQYKRLMPVIAKISGRTPGIDFRYARDWQEIS.

ATP is bound at residue 36–43; it reads GLSGGIDS. Aspartate 42 is a Mg(2+) binding site. Deamido-NAD(+) is bound at residue arginine 118. Position 138 (threonine 138) interacts with ATP. Glutamate 143 is a binding site for Mg(2+). Residues lysine 167 and serine 189 each contribute to the ATP site.

Belongs to the NAD synthetase family. In terms of assembly, homodimer.

The catalysed reaction is deamido-NAD(+) + NH4(+) + ATP = AMP + diphosphate + NAD(+) + H(+). Its pathway is cofactor biosynthesis; NAD(+) biosynthesis; NAD(+) from deamido-NAD(+) (ammonia route): step 1/1. Its function is as follows. Catalyzes the ATP-dependent amidation of deamido-NAD to form NAD. Uses ammonia as a nitrogen source. The sequence is that of NH(3)-dependent NAD(+) synthetase from Chlorobium phaeovibrioides (strain DSM 265 / 1930) (Prosthecochloris vibrioformis (strain DSM 265)).